Reading from the N-terminus, the 217-residue chain is Phosphatidylserine decarboxylase proenzyme (217 aa).

Catalysis depends on serine 187, which acts as the Schiff-base intermediate with substrate; via pyruvic acid. Serine 187 is modified (pyruvic acid (Ser); by autocatalysis).

It belongs to the phosphatidylserine decarboxylase family. PSD-A subfamily. As to quaternary structure, heterodimer of a large membrane-associated beta subunit and a small pyruvoyl-containing alpha subunit. The cofactor is pyruvate. Post-translationally, is synthesized initially as an inactive proenzyme. Formation of the active enzyme involves a self-maturation process in which the active site pyruvoyl group is generated from an internal serine residue via an autocatalytic post-translational modification. Two non-identical subunits are generated from the proenzyme in this reaction, and the pyruvate is formed at the N-terminus of the alpha chain, which is derived from the carboxyl end of the proenzyme. The post-translation cleavage follows an unusual pathway, termed non-hydrolytic serinolysis, in which the side chain hydroxyl group of the serine supplies its oxygen atom to form the C-terminus of the beta chain, while the remainder of the serine residue undergoes an oxidative deamination to produce ammonia and the pyruvoyl prosthetic group on the alpha chain.

It is found in the cell membrane. It carries out the reaction a 1,2-diacyl-sn-glycero-3-phospho-L-serine + H(+) = a 1,2-diacyl-sn-glycero-3-phosphoethanolamine + CO2. It participates in phospholipid metabolism; phosphatidylethanolamine biosynthesis; phosphatidylethanolamine from CDP-diacylglycerol: step 2/2. Functionally, catalyzes the formation of phosphatidylethanolamine (PtdEtn) from phosphatidylserine (PtdSer). This Thermobifida fusca (strain YX) protein is Phosphatidylserine decarboxylase proenzyme.